A 146-amino-acid polypeptide reads, in one-letter code: Ninjurin-1 (146 aa).

The disordered stretch occupies residues 1–33; the sequence is MASEAMELNGGVNRRDDPGARPQQGRMSRNTPL. Topologically, residues 1-75 are extracellular; that stretch reads MASEAMELNG…ELGPSFSFYI (75 aa). The interval 37–66 is required to induce plasma membrane rupture; it reads HYANKKSAAESMLDIALLMANASQLKTVLE. Positions 41 to 52 are helix alpha1; that stretch reads KKSAAESMLDIA. The tract at residues 55–71 is helix alpha2; the sequence is MANASQLKTVLELGPSF. A glycan (N-linked (GlcNAc...) asparagine) is linked at N57. A helical transmembrane segment spans residues 76 to 100; that stretch reads PLITLISISLTLQIIVGILLIFIVK. The Cytoplasmic segment spans residues 101 to 110; sequence WNLNDSSKHY. A helical membrane pass occupies residues 111–135; the sequence is ILNLLENIVTALVFIVVVVNVFITA. Residues 136-146 lie on the Extracellular side of the membrane; the sequence is FGVQRPDDKTS.

The protein belongs to the ninjurin family. In terms of assembly, homooligomer; in response to death stimuli, homooligomerizes into long, highly branched filaments and large, ring-shaped structures in the membrane. As to quaternary structure, homodimer; in absence of death stimuli, forms an inactive homodimer. Homooligomer; in response to death stimuli, homooligomerizes into long, highly branched filaments and large, ring-shaped structures in the membrane.

The protein resides in the cell membrane. It is found in the synaptic cell membrane. In normal conditions, NINJ1 is inactivated. In response to death stimuli, homooligomerizes and disrupts membrane integrity by introducing the hydrophilic faces of alpha1 and alpha2 helices into the hydrophobic membrane. Homooligomerization and ability to mediate plasma membrane rupture is inhibited by glycine; it is unclear whether glycine directly or indirectly inhibits homooligomerization. Its activity is regulated as follows. In response to death stimuli, homooligomerizes and disrupts membrane integrity by introducing the hydrophilic faces of alpha1 and alpha2 helices into the hydrophobic membrane. Homooligomerization and ability to mediate plasma membrane rupture is inhibited by glycine; it is unclear whether glycine directly or indirectly inhibits homooligomerization. In normal conditions, NINJ1 is autoinhibited via formation of a homodimer: in the inactive homodimer, the alpha1 and alpha2 helices (residues 41-71) form a single transmembrane region without a kink, in which hydrophilic faces of alpha1 and alpha2 helices are sequestered. Effector of various programmed cell death, such as pyroptosis and necroptosis, which mediates plasma membrane rupture (cytolysis). Oligomerizes in response to death stimuli and forms ring-like structures on the plasma membrane: acts by cutting and shedding membrane disks, like a cookie cutter, leading to membrane damage and loss that cannot be repaired by the cell. Plasma membrane rupture leads to release intracellular molecules named damage-associated molecular patterns (DAMPs) that propagate the inflammatory response. Mechanistically, mediates plasma membrane rupture by introducing hydrophilic faces of 2 alpha helices into the hydrophobic membrane. Induces plasma membrane rupture downstream of Gasdermin (GSDMA, GSDMB, GSDMC, GSDMD, or GSDME) or MLKL during pyroptosis or necroptosis, respectively. Also acts as an effector of PANoptosis and ferroptosis. Induces plasma membrane rupture in response to cell swelling caused by osmotic stress. Acts as a regulator of Toll-like receptor 4 (TLR4) signaling triggered by lipopolysaccharide (LPS) during systemic inflammation; directly binds LPS. Involved in leukocyte migration during inflammation by promoting transendothelial migration of macrophages via homotypic binding. Promotes the migration of monocytes across the brain endothelium to central nervous system inflammatory lesions. Also acts as a homophilic transmembrane adhesion molecule involved in various processes such as axonal growth, cell chemotaxis and angiogenesis. Promotes cell adhesion by mediating homophilic interactions via its extracellular N-terminal adhesion motif (N-NAM). Also involved in striated muscle growth and differentiation. The protein is Ninjurin-1 of Danio rerio (Zebrafish).